We begin with the raw amino-acid sequence, 668 residues long: DNA ligase (668 aa).

Residues 31–35 (DAEYD), 80–81 (SL), and Glu112 each bind NAD(+). The active-site N6-AMP-lysine intermediate is Lys114. Residues Arg135, Glu172, Lys289, and Lys313 each contribute to the NAD(+) site. Positions 407, 410, 425, and 431 each coordinate Zn(2+). The 78-residue stretch at 591–668 (SVPQPLAGKV…NEEQLIELLN (78 aa)) folds into the BRCT domain.

This sequence belongs to the NAD-dependent DNA ligase family. LigA subfamily. The cofactor is Mg(2+). Mn(2+) is required as a cofactor.

It carries out the reaction NAD(+) + (deoxyribonucleotide)n-3'-hydroxyl + 5'-phospho-(deoxyribonucleotide)m = (deoxyribonucleotide)n+m + AMP + beta-nicotinamide D-nucleotide.. DNA ligase that catalyzes the formation of phosphodiester linkages between 5'-phosphoryl and 3'-hydroxyl groups in double-stranded DNA using NAD as a coenzyme and as the energy source for the reaction. It is essential for DNA replication and repair of damaged DNA. This is DNA ligase from Aliivibrio fischeri (strain ATCC 700601 / ES114) (Vibrio fischeri).